Reading from the N-terminus, the 232-residue chain is 5'-methylthioadenosine/S-adenosylhomocysteine nucleosidase (232 aa).

The Proton acceptor role is filled by Glu12. Substrate contacts are provided by residues Gly78, Met153, and 174 to 175; that span reads ME. Asp198 functions as the Proton donor in the catalytic mechanism.

It belongs to the PNP/UDP phosphorylase family. MtnN subfamily.

It carries out the reaction S-adenosyl-L-homocysteine + H2O = S-(5-deoxy-D-ribos-5-yl)-L-homocysteine + adenine. The catalysed reaction is S-methyl-5'-thioadenosine + H2O = 5-(methylsulfanyl)-D-ribose + adenine. The enzyme catalyses 5'-deoxyadenosine + H2O = 5-deoxy-D-ribose + adenine. Its pathway is amino-acid biosynthesis; L-methionine biosynthesis via salvage pathway; S-methyl-5-thio-alpha-D-ribose 1-phosphate from S-methyl-5'-thioadenosine (hydrolase route): step 1/2. Functionally, catalyzes the irreversible cleavage of the glycosidic bond in both 5'-methylthioadenosine (MTA) and S-adenosylhomocysteine (SAH/AdoHcy) to adenine and the corresponding thioribose, 5'-methylthioribose and S-ribosylhomocysteine, respectively. Also cleaves 5'-deoxyadenosine, a toxic by-product of radical S-adenosylmethionine (SAM) enzymes, into 5-deoxyribose and adenine. The chain is 5'-methylthioadenosine/S-adenosylhomocysteine nucleosidase from Geobacillus sp. (strain WCH70).